A 236-amino-acid polypeptide reads, in one-letter code: CD81 antigen (236 aa).

At 1–12 (MGVEGCTKCIKY) the chain is on the cytoplasmic side. Residues 13-33 (LLFVFNFVFWLAGGVILGVAL) form a helical membrane-spanning segment. Residues 34–63 (WLRHDPQTTTLLYLELGDKPAPSTFYVGIY) lie on the Extracellular side of the membrane. A helical membrane pass occupies residues 64–84 (ILIAVGAVMMFVGFLGCYGAI). Topologically, residues 85–89 (QESQC) are cytoplasmic. A helical transmembrane segment spans residues 90–112 (LLGTFFTCLVILFACEVAAGIWG). At 113–201 (FVNKDQIAKD…QKIDELFSGK (89 aa)) the chain is on the extracellular side. 2 cysteine pairs are disulfide-bonded: C156-C190 and C157-C175. The helical transmembrane segment at 202–224 (LYLIGIAAIVVAVIMIFEMILSM) threads the bilayer. Cholesterol is bound at residue E219. The Cytoplasmic segment spans residues 225–236 (VLCCGIRNSSVY).

Belongs to the tetraspanin (TM4SF) family. As to quaternary structure, homodimer. Part of a complex composed of CD19, CR2/CD21, CD81 and IFITM1/CD225 in the membrane of mature B cells. Interacts (via the second extracellular domain) with CD19; this interaction is initiated early during biosynthesis in the ER and enables trafficking of only properly folded CD19. Part of a complex that includes MHC class II/HLA-DR molecules and IFITM1. Interacts with IFITM1. Interacts with IFITM2 and IFITM3. Part of integrin-tetraspanin complex composed of CD9, CD81, beta-1 and beta-2 integrins in the membrane of monocyte/macrophages. Interacts (via the second extracellular domain) with integrin ITGAV:ITGB3. Interacts with CD247/CD3 zeta, ICAM1 and CD9 at the immune synapse on T cell membrane. Part of a GPCR-tetraspanin complex consisting at least of ADGRG1, CD81, possibly CD9, and GNA11 in which CD81 enhances the association of ADGRG1 with GNA11. Part of a complex composed of CD9, CD81, PTGFRN and IGSF8. Interacts directly with IGSF8. Interacts with CD53 and SCIMP. Interacts with SAMHD1 (via its C-terminus). Interacts with glypican GPC3 and with the transcriptional repressor HHEX; binding to GPC3 decreases the availability of free CD81 for binding to HHEX, resulting in nuclear translocation of HHEX and transcriptional repression. Interacts with CLDN1. Interacts with CLDN6 and CLDN9. Not glycosylated. Post-translationally, likely constitutively palmitoylated at low levels. Protein palmitoylation is up-regulated upon coligation of BCR and CD9-C2R-CD81 complexes in lipid rafts.

Its subcellular location is the cell membrane. It is found in the basolateral cell membrane. Functionally, structural component of specialized membrane microdomains known as tetraspanin-enriched microdomains (TERMs), which act as platforms for receptor clustering and signaling. Essential for trafficking and compartmentalization of CD19 receptor on the surface of activated B cells. Upon initial encounter with microbial pathogens, enables the assembly of CD19-CR2/CD21 and B cell receptor (BCR) complexes at signaling TERMs, lowering the threshold dose of antigen required to trigger B cell clonal expansion and antibody production. In T cells, facilitates the localization of CD247/CD3 zeta at antigen-induced synapses with B cells, providing for costimulation and polarization toward T helper type 2 phenotype. Present in MHC class II compartments, may also play a role in antigen presentation. Can act both as positive and negative regulator of homotypic or heterotypic cell-cell fusion processes. Positively regulates sperm-egg fusion and may be involved in acrosome reaction. In myoblasts, associates with CD9 and PTGFRN and inhibits myotube fusion during muscle regeneration. In macrophages, associates with CD9 and beta-1 and beta-2 integrins, and prevents macrophage fusion into multinucleated giant cells specialized in ingesting complement-opsonized large particles. Also prevents the fusion of mononuclear cell progenitors into osteoclasts in charge of bone resorption. May regulate the compartmentalization of enzymatic activities. In T cells, defines the subcellular localization of dNTPase SAMHD1 and permits its degradation by the proteasome, thereby controlling intracellular dNTP levels. Also involved in cell adhesion and motility. Positively regulates integrin-mediated adhesion of macrophages, particularly relevant for the inflammatory response in the lung. The polypeptide is CD81 antigen (Cd81) (Rattus norvegicus (Rat)).